Here is a 617-residue protein sequence, read N- to C-terminus: mRNA-decapping enzyme 1B (617 aa).

Residue alanine 2 is modified to N-acetylalanine. Phosphoserine is present on serine 147. Position 191 is a phosphotyrosine (tyrosine 191). Disordered stretches follow at residues 195 to 222 and 243 to 266; these read NLIKPIPVKPSENQQQRIPQPNQTLDPE and TVEPPQTLHQQQQQQQQQQEKLPI. Residues 205–219 show a composition bias toward polar residues; the sequence is SENQQQRIPQPNQTL. Residues 252–261 are compositionally biased toward low complexity; the sequence is QQQQQQQQQQ. Phosphoserine occurs at positions 275 and 336. Positions 362–426 are disordered; that stretch reads TPGAANKCDP…VGHQAHGREQ (65 aa). Low complexity predominate over residues 371 to 381; it reads PSTPAPASSAA. Phosphothreonine is present on threonine 392. Phosphoserine is present on residues serine 448 and serine 511.

This sequence belongs to the DCP1 family. In terms of assembly, interacts with DCP1A. (Microbial infection) Interacts with rotavirus A non-structural protein 2; this interaction probably plays a role in the sequestration of DCP1B in viral factories. Interacts with rotavirus A non-structural protein 5; this interaction probably plays a role in its sequestration in viral factories.

The protein localises to the cytoplasm. Its subcellular location is the nucleus. The enzyme catalyses a 5'-end (N(7)-methyl 5'-triphosphoguanosine)-ribonucleoside in mRNA + H2O = N(7)-methyl-GDP + a 5'-end phospho-ribonucleoside in mRNA + 2 H(+). In terms of biological role, may play a role in the degradation of mRNAs, both in normal mRNA turnover and in nonsense-mediated mRNA decay. May remove the 7-methyl guanine cap structure from mRNA molecules, yielding a 5'-phosphorylated mRNA fragment and 7m-GDP. This Homo sapiens (Human) protein is mRNA-decapping enzyme 1B (DCP1B).